The chain runs to 434 residues: Eukaryotic translation initiation factor 3 subunit E (434 aa).

A PCI domain is found at 219–392 (FFNHPKGRDL…GHVVMGTQPL (174 aa)).

This sequence belongs to the eIF-3 subunit E family. Component of the eukaryotic translation initiation factor 3 (eIF-3) complex. The eIF-3 complex interacts with pix. Interacts with mxt.

It is found in the cytoplasm. In terms of biological role, component of the eukaryotic translation initiation factor 3 (eIF-3) complex, which is involved in protein synthesis of a specialized repertoire of mRNAs and, together with other initiation factors, stimulates binding of mRNA and methionyl-tRNAi to the 40S ribosome. The eIF-3 complex specifically targets and initiates translation of a subset of mRNAs involved in cell proliferation. This Drosophila virilis (Fruit fly) protein is Eukaryotic translation initiation factor 3 subunit E (eIF3-S6).